Consider the following 508-residue polypeptide: Photosystem II CP47 reaction center protein (508 aa).

A run of 6 helical transmembrane segments spans residues Ser21–Ser36, Ile101–Trp115, Gly140–Phe156, Ile203–Ser218, Val237–Val252, and Cys457–Arg472.

Belongs to the PsbB/PsbC family. PsbB subfamily. In terms of assembly, PSII is composed of 1 copy each of membrane proteins PsbA, PsbB, PsbC, PsbD, PsbE, PsbF, PsbH, PsbI, PsbJ, PsbK, PsbL, PsbM, PsbT, PsbX, PsbY, PsbZ, Psb30/Ycf12, at least 3 peripheral proteins of the oxygen-evolving complex and a large number of cofactors. It forms dimeric complexes. Requires Binds multiple chlorophylls. PSII binds additional chlorophylls, carotenoids and specific lipids. as cofactor.

It is found in the plastid. The protein localises to the chloroplast thylakoid membrane. In terms of biological role, one of the components of the core complex of photosystem II (PSII). It binds chlorophyll and helps catalyze the primary light-induced photochemical processes of PSII. PSII is a light-driven water:plastoquinone oxidoreductase, using light energy to abstract electrons from H(2)O, generating O(2) and a proton gradient subsequently used for ATP formation. The protein is Photosystem II CP47 reaction center protein of Mesostigma viride (Green alga).